A 129-amino-acid chain; its full sequence is Venom CUB domain-containing protein 1 (129 aa).

Residues Met1 to Ala18 form the signal peptide. A CUB domain is found at Ile19 to Thr121. Residues Cys66 and Cys83 are joined by a disulfide bond.

It belongs to the venom CUB family. Contains 2 disulfide bonds. In terms of tissue distribution, expressed by the venom gland.

Its subcellular location is the secreted. The protein is Venom CUB domain-containing protein 1 of Platymeris rhadamanthus (Red spot assassin bug).